A 217-amino-acid chain; its full sequence is D-glycero-beta-D-manno-heptose-1,7-bisphosphate 7-phosphatase (217 aa).

The active-site Nucleophile is the Asp36. 2 residues coordinate Mg(2+): Asp36 and Asp38. Substrate is bound by residues 36–38 (DRD), 44–47 (DTDY), 78–81 (TNQS), and 135–136 (RK). Asp38 functions as the Proton donor in the catalytic mechanism. 2 residues coordinate Mg(2+): Asp161 and Lys162. Position 162 (Lys162) interacts with substrate.

This sequence belongs to the gmhB family. In terms of assembly, monomer. The cofactor is Mg(2+).

The protein resides in the cytoplasm. The catalysed reaction is D-glycero-beta-D-manno-heptose 1,7-bisphosphate + H2O = D-glycero-beta-D-manno-heptose 1-phosphate + phosphate. Its pathway is nucleotide-sugar biosynthesis; ADP-L-glycero-beta-D-manno-heptose biosynthesis; ADP-L-glycero-beta-D-manno-heptose from D-glycero-beta-D-manno-heptose 7-phosphate: step 2/4. Its function is as follows. Converts the D-glycero-beta-D-manno-heptose 1,7-bisphosphate (beta-HBP) intermediate into D-glycero-beta-D-manno-heptose 1-phosphate by removing the phosphate group at the C-7 position. This Mesorhizobium japonicum (strain LMG 29417 / CECT 9101 / MAFF 303099) (Mesorhizobium loti (strain MAFF 303099)) protein is D-glycero-beta-D-manno-heptose-1,7-bisphosphate 7-phosphatase (gmhB).